The primary structure comprises 246 residues: Outer membrane protein assembly factor BamD (246 aa).

The signal sequence occupies residues 1 to 22 (MKKKNSIIFVFMILFFNSTVQS).

Belongs to the BamD family. As to quaternary structure, part of the Bam complex.

It localises to the cell outer membrane. Functionally, part of the outer membrane protein assembly complex, which is involved in assembly and insertion of beta-barrel proteins into the outer membrane. The polypeptide is Outer membrane protein assembly factor BamD (Buchnera aphidicola subsp. Acyrthosiphon pisum (strain APS) (Acyrthosiphon pisum symbiotic bacterium)).